A 38-amino-acid chain; its full sequence is Large ribosomal subunit protein bL36A (38 aa).

It belongs to the bacterial ribosomal protein bL36 family.

This is Large ribosomal subunit protein bL36A from Cronobacter sakazakii (strain ATCC BAA-894) (Enterobacter sakazakii).